The primary structure comprises 363 residues: UDP-3-O-acylglucosamine N-acyltransferase (363 aa).

The Proton acceptor role is filled by His259.

It belongs to the transferase hexapeptide repeat family. LpxD subfamily. As to quaternary structure, homotrimer.

It carries out the reaction a UDP-3-O-[(3R)-3-hydroxyacyl]-alpha-D-glucosamine + a (3R)-hydroxyacyl-[ACP] = a UDP-2-N,3-O-bis[(3R)-3-hydroxyacyl]-alpha-D-glucosamine + holo-[ACP] + H(+). It participates in bacterial outer membrane biogenesis; LPS lipid A biosynthesis. In terms of biological role, catalyzes the N-acylation of UDP-3-O-acylglucosamine using 3-hydroxyacyl-ACP as the acyl donor. Is involved in the biosynthesis of lipid A, a phosphorylated glycolipid that anchors the lipopolysaccharide to the outer membrane of the cell. The polypeptide is UDP-3-O-acylglucosamine N-acyltransferase (Ruegeria pomeroyi (strain ATCC 700808 / DSM 15171 / DSS-3) (Silicibacter pomeroyi)).